Here is a 343-residue protein sequence, read N- to C-terminus: Heat-inducible transcription repressor HrcA (343 aa).

It belongs to the HrcA family.

In terms of biological role, negative regulator of class I heat shock genes (grpE-dnaK-dnaJ and groELS operons). Prevents heat-shock induction of these operons. The polypeptide is Heat-inducible transcription repressor HrcA (Mycobacterium avium (strain 104)).